We begin with the raw amino-acid sequence, 21 residues long: DLWSWGQMIQETGLLPSYTTY.

The protein belongs to the phospholipase A2 family. Group II subfamily. As to quaternary structure, can form dimers, trimers and tetramers. Ca(2+) is required as a cofactor. Post-translationally, contains seven disulfide bonds. As to expression, expressed by the venom gland.

Its subcellular location is the secreted. The enzyme catalyses a 1,2-diacyl-sn-glycero-3-phosphocholine + H2O = a 1-acyl-sn-glycero-3-phosphocholine + a fatty acid + H(+). With respect to regulation, inhibited by crotapotin. Functionally, snake venom phospholipase A2 has a high enzymatic activity and produces moderate myonecrosis in skeletal muscle, but shows no neuromuscular activity in mouse phrenic nerve-diaphragm preparations. PLA2 catalyzes the calcium-dependent hydrolysis of the 2-acyl groups in 3-sn-phosphoglycerides. The protein is Basic phospholipase A2 BjIV of Bothrops jararacussu (Jararacussu).